The primary structure comprises 368 residues: CST complex subunit STN1 (368 aa).

The interaction with CTC1 stretch occupies residues 1 to 185 (MQPGSSRCEE…KVYDQPFHSS (185 aa)). The OB DNA-binding region spans 57-155 (VDVLGTVIGV…EIHATTYYKV (99 aa)). Winged helix-turn-helix (wHTH) regions lie at residues 191 to 295 (EALS…YVTR) and 296 to 368 (EDKD…YTAF).

It belongs to the STN1 family. Component of the CST complex, composed of TEN1/C17orf106, CTC1/C17orf68 and STN1; in the complex interacts directly with TEN1 and CTC1. Interacts with ACD/TPP1, POT1 and POLA1.

Its subcellular location is the nucleus. It localises to the chromosome. The protein localises to the telomere. Functionally, component of the CST complex proposed to act as a specialized replication factor promoting DNA replication under conditions of replication stress or natural replication barriers such as the telomere duplex. The CST complex binds single-stranded DNA with high affinity in a sequence-independent manner, while isolated subunits bind DNA with low affinity by themselves. Initially the CST complex has been proposed to protect telomeres from DNA degradation. However, the CST complex has been shown to be involved in several aspects of telomere replication. The CST complex inhibits telomerase and is involved in telomere length homeostasis; it is proposed to bind to newly telomerase-synthesized 3' overhangs and to terminate telomerase action implicating the association with the ACD:POT1 complex thus interfering with its telomerase stimulation activity. The CST complex is also proposed to be involved in fill-in synthesis of the telomeric C-strand probably implicating recruitment and activation of DNA polymerase alpha. The CST complex facilitates recovery from many forms of exogenous DNA damage; seems to be involved in the re-initiation of DNA replication at repaired forks and/or dormant origins. Required for efficicient replication of the duplex region of the telomere. Promotes efficient replication of lagging-strand telomeres. Promotes general replication start following replication-fork stalling implicating new origin firing. May be in involved in C-strand fill-in during late S/G2 phase independent of its role in telomere duplex replication. Its function is as follows. Component of the CST complex, a complex that binds to single-stranded DNA and is required to protect telomeres from DNA degradation. The CST complex binds single-stranded DNA with high affinity in a sequence-independent manner, while isolated subunits bind DNA with low affinity by themselves. In addition to telomere protection, the CST complex has probably a more general role in DNA metabolism at non-telomeric sites. The polypeptide is CST complex subunit STN1 (Homo sapiens (Human)).